We begin with the raw amino-acid sequence, 95 residues long: Co-chaperonin GroES (95 aa).

Belongs to the GroES chaperonin family. In terms of assembly, heptamer of 7 subunits arranged in a ring. Interacts with the chaperonin GroEL.

Its subcellular location is the cytoplasm. In terms of biological role, together with the chaperonin GroEL, plays an essential role in assisting protein folding. The GroEL-GroES system forms a nano-cage that allows encapsulation of the non-native substrate proteins and provides a physical environment optimized to promote and accelerate protein folding. GroES binds to the apical surface of the GroEL ring, thereby capping the opening of the GroEL channel. This Rickettsia rickettsii (strain Sheila Smith) protein is Co-chaperonin GroES.